A 278-amino-acid chain; its full sequence is Protein D7 (278 aa).

CHHC U11-48K-type zinc fingers lie at residues 6-33 (LMQCPYDKNHMIRPSRFPYHLVKCRENN) and 40-67 (LATCPYNARHRVPKQELDLHMASCEYRV). Zn(2+) is bound by residues C9, H15, H25, C29, C43, H49, H59, and C63. A compositionally biased stretch (polar residues) spans 149–164 (QVKQNQPEPEPFTSSE). 2 disordered regions span residues 149–230 (QVKQ…PKAN) and 249–278 (PGGSSAASEPLGVDSFDEWPCLGRQPWVRK). Residues 165-175 (RNYDPRSKEPP) show a composition bias toward basic and acidic residues. Polar residues predominate over residues 188–200 (ATTNTNPWCRQTG). Positions 214-225 (SSDEGPRNKEFP) are enriched in basic and acidic residues.

The protein belongs to the UPF0224 (FAM112) family.

The protein resides in the cytoplasm. Involved in oocyte maturation. It is possible that D7 is required at a certain point in the maturation process and that maturation cannot proceed beyond this point unless a threshold amount of D7 protein is provided. The chain is Protein D7 (d7) from Xenopus laevis (African clawed frog).